We begin with the raw amino-acid sequence, 474 residues long: Kynureninase 2 (474 aa).

Pyridoxal 5'-phosphate is bound by residues Leu-144, Thr-145, 172 to 175, Asp-258, His-261, and Tyr-283; that span reads FPSD. The residue at position 284 (Lys-284) is an N6-(pyridoxal phosphate)lysine. Positions 323 and 351 each coordinate pyridoxal 5'-phosphate.

It belongs to the kynureninase family. In terms of assembly, homodimer. The cofactor is pyridoxal 5'-phosphate.

The protein resides in the cytoplasm. The enzyme catalyses L-kynurenine + H2O = anthranilate + L-alanine + H(+). It carries out the reaction 3-hydroxy-L-kynurenine + H2O = 3-hydroxyanthranilate + L-alanine + H(+). It functions in the pathway amino-acid degradation; L-kynurenine degradation; L-alanine and anthranilate from L-kynurenine: step 1/1. Its pathway is cofactor biosynthesis; NAD(+) biosynthesis; quinolinate from L-kynurenine: step 2/3. Functionally, catalyzes the cleavage of L-kynurenine (L-Kyn) and L-3-hydroxykynurenine (L-3OHKyn) into anthranilic acid (AA) and 3-hydroxyanthranilic acid (3-OHAA), respectively. The protein is Kynureninase 2 (bna5-2) of Emericella nidulans (strain FGSC A4 / ATCC 38163 / CBS 112.46 / NRRL 194 / M139) (Aspergillus nidulans).